The chain runs to 605 residues: Elongation factor 4 (605 aa).

The tr-type G domain maps to 9–192 (GMIRNFCIIA…AIVQRIPAPA (184 aa)). GTP is bound by residues 21–26 (DHGKST) and 139–142 (NKID).

The protein belongs to the TRAFAC class translation factor GTPase superfamily. Classic translation factor GTPase family. LepA subfamily.

The protein resides in the cell inner membrane. It catalyses the reaction GTP + H2O = GDP + phosphate + H(+). In terms of biological role, required for accurate and efficient protein synthesis under certain stress conditions. May act as a fidelity factor of the translation reaction, by catalyzing a one-codon backward translocation of tRNAs on improperly translocated ribosomes. Back-translocation proceeds from a post-translocation (POST) complex to a pre-translocation (PRE) complex, thus giving elongation factor G a second chance to translocate the tRNAs correctly. Binds to ribosomes in a GTP-dependent manner. The sequence is that of Elongation factor 4 from Chlorobaculum parvum (strain DSM 263 / NCIMB 8327) (Chlorobium vibrioforme subsp. thiosulfatophilum).